The following is a 517-amino-acid chain: Retrotransposon-like protein 1 (517 aa).

Disordered stretches follow at residues 1–29 (MEVN…QQQL) and 142–161 (EEER…DARS).

This Caenorhabditis elegans protein is Retrotransposon-like protein 1 (retr-1).